The sequence spans 196 residues: NAD(P)H-quinone oxidoreductase subunit I (196 aa).

4Fe-4S ferredoxin-type domains are found at residues 55–84 and 95–124; these read GRIH…VDWE and KHYS…MTEE. Residues Cys-64, Cys-67, Cys-70, Cys-74, Cys-104, Cys-107, Cys-110, and Cys-114 each contribute to the [4Fe-4S] cluster site. A disordered region spans residues 170–196; it reads SPHDLPEGSQRSGKRPEEIIEEAEASS.

This sequence belongs to the complex I 23 kDa subunit family. In terms of assembly, NDH-1 is composed of at least 11 different subunits. [4Fe-4S] cluster serves as cofactor.

It is found in the cellular thylakoid membrane. The catalysed reaction is a plastoquinone + NADH + (n+1) H(+)(in) = a plastoquinol + NAD(+) + n H(+)(out). The enzyme catalyses a plastoquinone + NADPH + (n+1) H(+)(in) = a plastoquinol + NADP(+) + n H(+)(out). NDH-1 shuttles electrons from an unknown electron donor, via FMN and iron-sulfur (Fe-S) centers, to quinones in the respiratory and/or the photosynthetic chain. The immediate electron acceptor for the enzyme in this species is believed to be plastoquinone. Couples the redox reaction to proton translocation, and thus conserves the redox energy in a proton gradient. This Crocosphaera subtropica (strain ATCC 51142 / BH68) (Cyanothece sp. (strain ATCC 51142)) protein is NAD(P)H-quinone oxidoreductase subunit I.